The sequence spans 195 residues: Imidazoleglycerol-phosphate dehydratase (195 aa).

It belongs to the imidazoleglycerol-phosphate dehydratase family.

It localises to the cytoplasm. It carries out the reaction D-erythro-1-(imidazol-4-yl)glycerol 3-phosphate = 3-(imidazol-4-yl)-2-oxopropyl phosphate + H2O. The protein operates within amino-acid biosynthesis; L-histidine biosynthesis; L-histidine from 5-phospho-alpha-D-ribose 1-diphosphate: step 6/9. The chain is Imidazoleglycerol-phosphate dehydratase from Geobacter metallireducens (strain ATCC 53774 / DSM 7210 / GS-15).